Consider the following 360-residue polypeptide: MSGSVLFTAGERWRCFLTPSRSSLYWALHNFCCRKKSTTPKKITPNVTFCDENAKEPENALDKLFSSEQQASILHVLNTASTKELEAFRLLRGRRSINIVEHRENFGPFQNLESLMNVPLFKYKSTVQVCNSILCPKTGREKRKSPENRFLRKLLKPDIERERLKAVNSIISIVFGTRRIAWAHLDRKLTVLDWQQSDRWSLMRGIYSSSVYLEEISSIISKMPKADFYVLEKTGLSIQNSSLFPILLHFHIMEAMLYALLNKTFAQDGQHQVLSMNRNAVGKHFELMIGDSRTSGKELVKQFLFDSILKADPRVFFPSDKIVHYRQMFLSTELQRVEELYDSLLQAIAFYELAVFDSQP.

The N-terminal 35 residues, 1 to 35 (MSGSVLFTAGERWRCFLTPSRSSLYWALHNFCCRK), are a transit peptide targeting the mitochondrion.

It belongs to the TEFM family. In terms of assembly, interacts with POLRMT.

Its subcellular location is the mitochondrion matrix. The protein resides in the mitochondrion nucleoid. Its function is as follows. Transcription elongation factor which increases mitochondrial RNA polymerase processivity. Regulates transcription of the mitochondrial genome, including genes important for the oxidative phosphorylation machinery. In Homo sapiens (Human), this protein is Transcription elongation factor, mitochondrial (TEFM).